Here is a 719-residue protein sequence, read N- to C-terminus: Translation factor guf1, mitochondrial (719 aa).

Residues 1 to 75 constitute a mitochondrion transit peptide; the sequence is MRGALCRPDV…TRCFSALRSL (75 aa). The region spanning 119 to 301 is the tr-type G domain; that stretch reads ERYRNFCIVA…AVISNVPAPV (183 aa). GTP contacts are provided by residues 128-135, 194-198, and 248-251; these read AHIDHGKS, DTPGH, and NKID.

It belongs to the TRAFAC class translation factor GTPase superfamily. Classic translation factor GTPase family. LepA subfamily.

It localises to the mitochondrion inner membrane. It catalyses the reaction GTP + H2O = GDP + phosphate + H(+). Functionally, promotes mitochondrial protein synthesis. May act as a fidelity factor of the translation reaction, by catalyzing a one-codon backward translocation of tRNAs on improperly translocated ribosomes. Binds to mitochondrial ribosomes in a GTP-dependent manner. This Neurospora crassa (strain ATCC 24698 / 74-OR23-1A / CBS 708.71 / DSM 1257 / FGSC 987) protein is Translation factor guf1, mitochondrial (guf1).